A 616-amino-acid polypeptide reads, in one-letter code: Chaperone protein HscA (616 aa).

The protein belongs to the heat shock protein 70 family.

In terms of biological role, chaperone involved in the maturation of iron-sulfur cluster-containing proteins. Has a low intrinsic ATPase activity which is markedly stimulated by HscB. Involved in the maturation of IscU. This is Chaperone protein HscA from Salmonella paratyphi B (strain ATCC BAA-1250 / SPB7).